Reading from the N-terminus, the 219-residue chain is Guanylate kinase (219 aa).

The Guanylate kinase-like domain maps to 15-194 (GLMFVLSSPS…AFESVKAILR (180 aa)). 22–29 (SPSGAGKT) serves as a coordination point for ATP.

This sequence belongs to the guanylate kinase family.

The protein resides in the cytoplasm. The enzyme catalyses GMP + ATP = GDP + ADP. In terms of biological role, essential for recycling GMP and indirectly, cGMP. The chain is Guanylate kinase from Rhodopseudomonas palustris (strain BisB5).